Consider the following 553-residue polypeptide: Telomere repeat-binding protein 2 (553 aa).

A disordered region spans residues 147 to 170; sequence SSTEVGACGNGSPNESRDDVNLFS. The region spanning 285–364 is the Ubiquitin-like domain; that stretch reads VKLRIKSFRV…HLDSLGFSLE (80 aa). A disordered region spans residues 394–413; that stretch reads ALDSSHEPEPSPADSFGKLG. The HTH myb-type domain occupies 448–507; that stretch reads AQRRIRRPFSVTEVEALVQAVEKLGTGRWRDVKVRAFEDADHRTYVDLKDKWKTLVHTAR. A DNA-binding region (H-T-H motif) is located at residues 476-503; it reads WRDVKVRAFEDADHRTYVDLKDKWKTLV.

In terms of assembly, homodimer and heterodimer with TRP1. Interacts with SNL1. In terms of tissue distribution, expressed ubiquitously. Highest expression in flowers and leaves.

The protein localises to the nucleus. Functionally, binds specifically to the plant telomeric double-stranded DNA sequences. At least 2 repeats of telomeric sequences are required for binding. Induces DNA bending. This Arabidopsis thaliana (Mouse-ear cress) protein is Telomere repeat-binding protein 2 (TRP2).